The primary structure comprises 549 residues: Pyrophosphate--fructose 6-phosphate 1-phosphotransferase (549 aa).

G78 serves as a coordination point for diphosphate. Mg(2+) is bound at residue D172. Substrate-binding positions include 200–202 (TID), 239–240 (KY), 247–249 (MGR), E308, and 421–424 (YEGR). The active-site Proton acceptor is the D202.

This sequence belongs to the phosphofructokinase type A (PFKA) family. PPi-dependent PFK group II subfamily. Clade 'Long' sub-subfamily. Homodimer. The cofactor is Mg(2+).

It localises to the cytoplasm. It carries out the reaction beta-D-fructose 6-phosphate + diphosphate = beta-D-fructose 1,6-bisphosphate + phosphate + H(+). It participates in carbohydrate degradation; glycolysis; D-glyceraldehyde 3-phosphate and glycerone phosphate from D-glucose: step 3/4. With respect to regulation, non-allosteric. Its function is as follows. Catalyzes the phosphorylation of D-fructose 6-phosphate, the first committing step of glycolysis. Uses inorganic phosphate (PPi) as phosphoryl donor instead of ATP like common ATP-dependent phosphofructokinases (ATP-PFKs), which renders the reaction reversible, and can thus function both in glycolysis and gluconeogenesis. Consistently, PPi-PFK can replace the enzymes of both the forward (ATP-PFK) and reverse (fructose-bisphosphatase (FBPase)) reactions. This chain is Pyrophosphate--fructose 6-phosphate 1-phosphotransferase, found in Porphyromonas gingivalis (Bacteroides gingivalis).